A 413-amino-acid polypeptide reads, in one-letter code: Elongation factor 1-alpha (413 aa).

The 207-residue stretch at 5-211 folds into the tr-type G domain; it reads KEHINLAFIG…DNLAAPEKPV (207 aa). The G1 stretch occupies residues 14–21; that stretch reads GHVDHGKS. Residue 14-21 coordinates GTP; that stretch reads GHVDHGKS. Position 21 (S21) interacts with Mg(2+). The tract at residues 60–64 is G2; sequence GVTID. The G3 stretch occupies residues 81–84; that stretch reads DCPG. GTP is bound by residues 81-85 and 136-139; these read DCPGH and NKID. A G4 region spans residues 136 to 139; it reads NKID. The segment at 175 to 177 is G5; the sequence is SAF.

Belongs to the TRAFAC class translation factor GTPase superfamily. Classic translation factor GTPase family. EF-Tu/EF-1A subfamily.

The protein localises to the cytoplasm. The enzyme catalyses GTP + H2O = GDP + phosphate + H(+). In terms of biological role, GTP hydrolase that promotes the GTP-dependent binding of aminoacyl-tRNA to the A-site of ribosomes during protein biosynthesis. The polypeptide is Elongation factor 1-alpha (Methanobrevibacter smithii (strain ATCC 35061 / DSM 861 / OCM 144 / PS)).